Reading from the N-terminus, the 263-residue chain is Troponin T, slow skeletal muscle (263 aa).

The span at 1–38 (MSDAEEQEYEEEQPEEEEAAEEEEEAPEEPEPAAEPEE) shows a compositional bias: acidic residues. Disordered regions lie at residues 1–64 (MSDA…RVDF) and 109–154 (AERA…KKKV). The residue at position 2 (serine 2) is a Phosphoserine; by CK2. Residues 44–56 (SRPVVPPLIPPKI) are compositionally biased toward pro residues. Positions 109–150 (AERAEQQRFRTEKERERQAKLAEEKMRKEEEEAKKRAEDDAK) are enriched in basic and acidic residues.

This sequence belongs to the troponin T family. Interacts with TPM3. Expressed dominantly in slow muscles, like masseter, diaphragm, psoas major and spinnalis. Isoform 2 is also expressed in fast muscles.

Functionally, troponin T is the tropomyosin-binding subunit of troponin, the thin filament regulatory complex which confers calcium-sensitivity to striated muscle actomyosin ATPase activity. This is Troponin T, slow skeletal muscle (TNNT1) from Bos taurus (Bovine).